A 198-amino-acid chain; its full sequence is MTATGTSVSLLKFVGTVSLGLLTGVSYSISSLALPALLRLPSSASASHGLSTLSAALKTPVLALTSLASAPFLISFFLAPRSSRHPYLLYTAILATLSSVAPILIPTPTPAPRRTASSAPRKSSRAKMEASYEVLGDAHSEPASDEDIEDINGEEVRAEVEGLTRSYLARTAISALGFAMAVVGIWGDGAPQSVVYVS.

Transmembrane regions (helical) follow at residues 17-37 (VSLG…LPAL), 60-80 (PVLA…FLAP), and 86-106 (PYLL…ILIP). The interval 111–147 (APRRTASSAPRKSSRAKMEASYEVLGDAHSEPASDED) is disordered. Residues 112–121 (PRRTASSAPR) are compositionally biased toward low complexity. Basic and acidic residues predominate over residues 126 to 142 (AKMEASYEVLGDAHSEP). Residues 171–191 (TAISALGFAMAVVGIWGDGAP) form a helical membrane-spanning segment.

This sequence belongs to the ATG33 family.

It localises to the mitochondrion membrane. Functionally, involved in the selective degradation of mitochondria via autophagy during starvation and at post-log phase. Autophagy is required for proper vegetative growth, asexual/sexual reproduction, and full virulence. Autophagy is particularly involved in the biosynthesis of deoxynivalenol (DON), an important virulence determinant. The sequence is that of Autophagy-related protein 33 from Gibberella zeae (strain ATCC MYA-4620 / CBS 123657 / FGSC 9075 / NRRL 31084 / PH-1) (Wheat head blight fungus).